An 882-amino-acid polypeptide reads, in one-letter code: Valine--tRNA ligase (882 aa).

The short motif at 45 to 55 (PNVTGKLHLGH) is the 'HIGH' region element. The 'KMSKS' region signature appears at 519–523 (KMSKS). Lys522 contacts ATP. Positions 808 to 882 (LADLLNVEEE…RIAEMHKLVK (75 aa)) form a coiled coil.

It belongs to the class-I aminoacyl-tRNA synthetase family. ValS type 1 subfamily. As to quaternary structure, monomer.

It localises to the cytoplasm. The enzyme catalyses tRNA(Val) + L-valine + ATP = L-valyl-tRNA(Val) + AMP + diphosphate. Its function is as follows. Catalyzes the attachment of valine to tRNA(Val). As ValRS can inadvertently accommodate and process structurally similar amino acids such as threonine, to avoid such errors, it has a 'posttransfer' editing activity that hydrolyzes mischarged Thr-tRNA(Val) in a tRNA-dependent manner. In Streptococcus pyogenes serotype M18 (strain MGAS8232), this protein is Valine--tRNA ligase.